We begin with the raw amino-acid sequence, 200 residues long: Phospholipase A2 inhibitor 1 (200 aa).

The N-terminal stretch at 1 to 19 (MKSLHIICLLFIFVARGNS) is a signal peptide. Intrachain disulfides connect Cys-22–Cys-46, Cys-25–Cys-32, Cys-39–Cys-67, Cys-73–Cys-94, Cys-95–Cys-100, Cys-118–Cys-143, Cys-136–Cys-165, and Cys-169–Cys-191. The N-linked (GlcNAc...) asparagine glycan is linked to Asn-176.

This sequence belongs to the CNF-like-inhibitor family. In terms of assembly, occurs as a mixture of oligomers. Tetrameric arrangement appears to be the predominant quaternary structure. N-glycosylated. As to expression, expressed by the liver.

The protein resides in the secreted. In terms of biological role, inhibits basic phospholipase A2 isozymes PLA-B, BP-I and BP-II. The sequence is that of Phospholipase A2 inhibitor 1 from Protobothrops flavoviridis (Habu).